A 457-amino-acid polypeptide reads, in one-letter code: MEFDTIAAISTPPGEGAIAIIRLSGPEAIQIADRIFYAKKNLSEAESHTIHYGHIKEDGEVIEEVMVTVMRAPRTFTREDVVEINAHGGIVSVNRVLQLLLRNGANLAEPGEFTKRAFLNGRIDLSQAEAVMDLIRAKTDRAMGVAIRQMDGNLSRLIRNLRQEILDALAQVEVNIDYPEYDDVEEMTQRMLLEKTELVRASVEQLLQTASQGKILREGLATAIIGRPNVGKSSLLNQLIQEEKAIVTDIAGTTRDIIEEYVNVRGVPLRLIDTAGIRETEDIVEKIGVERSRKALADADFILLVLNQNEELTVEDEALFEAAAGHNYVVVLNKTDLETKLDINKVRELAGENPIVSTSLVNDEGLEALEEAIKTLFFAGDIDAGDATYVSNVRHIALLHQALEALNAVTTGIQLGMPVDIVQIDMTRAWDLLGEITGDSVQDELLDQLFNQFCLGK.

Residues arginine 22, glutamate 83, and arginine 122 each contribute to the (6S)-5-formyl-5,6,7,8-tetrahydrofolate site. In terms of domain architecture, TrmE-type G spans 219–378; it reads GLATAIIGRP…LEEAIKTLFF (160 aa). Asparagine 229 lines the K(+) pocket. GTP contacts are provided by residues 229–234, 248–254, and 273–276; these read NVGKSS, TDIAGTT, and DTAG. Serine 233 serves as a coordination point for Mg(2+). Positions 248, 250, and 253 each coordinate K(+). Mg(2+) is bound at residue threonine 254. (6S)-5-formyl-5,6,7,8-tetrahydrofolate is bound at residue lysine 457.

This sequence belongs to the TRAFAC class TrmE-Era-EngA-EngB-Septin-like GTPase superfamily. TrmE GTPase family. Homodimer. Heterotetramer of two MnmE and two MnmG subunits. K(+) is required as a cofactor.

It localises to the cytoplasm. Exhibits a very high intrinsic GTPase hydrolysis rate. Involved in the addition of a carboxymethylaminomethyl (cmnm) group at the wobble position (U34) of certain tRNAs, forming tRNA-cmnm(5)s(2)U34. The sequence is that of tRNA modification GTPase MnmE from Listeria welshimeri serovar 6b (strain ATCC 35897 / DSM 20650 / CCUG 15529 / CIP 8149 / NCTC 11857 / SLCC 5334 / V8).